The chain runs to 762 residues: Protein PHTF1 (762 aa).

Residues 6-150 (RDAISWYQKK…VHCQIVSTQI (145 aa)) form the PHTF domain. The next 3 helical transmembrane spans lie at 77–97 (GLVR…VTSL), 99–119 (IFVW…LYLM), and 121–141 (PIVS…MGTV). Residues 152 to 184 (RPSGNNGNRRRRKLRKTVNGDGTRDNGNNSPDK) are disordered. Asn-179 and Asn-224 each carry an N-linked (GlcNAc...) asparagine glycan. 5 positions are modified to phosphoserine: Ser-272, Ser-276, Ser-277, Ser-334, and Ser-336. Positions 345–415 (AAFSQGSRSG…NTLHSGTKRD (71 aa)) are disordered. Residues 348–364 (SQGSRSGMSGGSRSLNL) show a composition bias toward low complexity. An N-linked (GlcNAc...) asparagine glycan is attached at Asn-363. Over residues 365-376 (SRRDSESTRHDS) the composition is skewed to basic and acidic residues. Asn-431 carries an N-linked (GlcNAc...) asparagine glycan. 4 helical membrane-spanning segments follow: residues 473–493 (GVGY…FPFL), 515–535 (TLFC…INFF), 611–631 (VVVS…CAQV), and 645–665 (WEFL…ASLG). Asn-674 and Asn-733 each carry an N-linked (GlcNAc...) asparagine glycan. A helical membrane pass occupies residues 737–757 (VVILSAVSGVISDLLGFNIRL).

Interacts with FEM1B. As to expression, highly expressed in testis.

It localises to the endoplasmic reticulum membrane. The protein localises to the golgi apparatus. It is found in the cis-Golgi network membrane. This Rattus norvegicus (Rat) protein is Protein PHTF1.